Consider the following 155-residue polypeptide: UPF0060 membrane protein MA_3936 (155 aa).

The next 3 membrane-spanning stretches (helical) occupy residues 8–28 (LCPF…ICLW), 35–55 (AVFG…PTFQ), and 62–82 (VYAA…LFVD).

This sequence belongs to the UPF0060 family.

The protein localises to the cell membrane. This is UPF0060 membrane protein MA_3936 from Methanosarcina acetivorans (strain ATCC 35395 / DSM 2834 / JCM 12185 / C2A).